The following is a 299-amino-acid chain: Taste receptor type 2 member 4 (299 aa).

The Extracellular segment spans residues 1–9; the sequence is MLRLFYFSA. A helical transmembrane segment spans residues 10-30; the sequence is IIASVILNFVGIIMNLFITVV. The Cytoplasmic segment spans residues 31–46; that stretch reads NCKTWVKSHRISSSDR. The helical transmembrane segment at 47 to 67 threads the bilayer; sequence ILFSLGITRFLMLGLFLVNTI. Over 68 to 81 the chain is Extracellular; it reads YFVSSNTERSVYLS. A helical transmembrane segment spans residues 82–102; that stretch reads AFFVLCFMFLDSSSLWFVTLL. Over 103 to 131 the chain is Cytoplasmic; sequence NILYCVKITNFQHSVFLLLKRNISPKIPR. The chain crosses the membrane as a helical span at residues 132–152; it reads LLLACVLISAFTTCLYITLSQ. Residues 153-172 lie on the Extracellular side of the membrane; sequence ASPFPELVTTRNNTSFNINE. N-linked (GlcNAc...) asparagine glycosylation is found at asparagine 164 and asparagine 165. Residues 173–193 form a helical membrane-spanning segment; that stretch reads GILSLVVSLVLSSSLQFIINV. Residues 194–230 are Cytoplasmic-facing; the sequence is TSASLLIHSLRRHIQKMQKNATGFWNPQTEAHVGAMK. A helical transmembrane segment spans residues 231–251; it reads LMVYFLILYIPYSVATLVQYL. At 252–262 the chain is on the extracellular side; the sequence is PFYAGMDMGTK. The helical transmembrane segment at 263-283 threads the bilayer; sequence SICLIFATLYSPGHSVLIIIT. Over 284-299 the chain is Cytoplasmic; the sequence is HPKLKTTAKKILCFKK.

This sequence belongs to the G-protein coupled receptor T2R family.

Its subcellular location is the membrane. It localises to the cell projection. The protein localises to the cilium membrane. Functionally, gustducin-coupled receptor implicated in the perception of bitter compounds in the oral cavity and the gastrointestinal tract. Signals through PLCB2 and the calcium-regulated cation channel TRPM5. In airway epithelial cells, binding of denatonium increases the intracellular calcium ion concentration and stimulates ciliary beat frequency. This chain is Taste receptor type 2 member 4 (TAS2R4), found in Pan paniscus (Pygmy chimpanzee).